Here is a 365-residue protein sequence, read N- to C-terminus: 3-dehydroquinate synthase (365 aa).

NAD(+) is bound by residues 106–110 (GVIGD), 130–131 (TT), Lys142, Lys151, and 169–172 (FFAT). Zn(2+)-binding residues include Glu184, His247, and His264.

The protein belongs to the sugar phosphate cyclases superfamily. Dehydroquinate synthase family. The cofactor is NAD(+). Co(2+) serves as cofactor. Requires Zn(2+) as cofactor.

The protein localises to the cytoplasm. It carries out the reaction 7-phospho-2-dehydro-3-deoxy-D-arabino-heptonate = 3-dehydroquinate + phosphate. It functions in the pathway metabolic intermediate biosynthesis; chorismate biosynthesis; chorismate from D-erythrose 4-phosphate and phosphoenolpyruvate: step 2/7. Catalyzes the conversion of 3-deoxy-D-arabino-heptulosonate 7-phosphate (DAHP) to dehydroquinate (DHQ). In Listeria monocytogenes serotype 4b (strain F2365), this protein is 3-dehydroquinate synthase.